Consider the following 287-residue polypeptide: Phosphatidylserine decarboxylase proenzyme (287 aa).

Catalysis depends on charge relay system; for autoendoproteolytic cleavage activity residues Asp-86, His-143, and Ser-250. The active-site Schiff-base intermediate with substrate; via pyruvic acid; for decarboxylase activity is the Ser-250. Residue Ser-250 is modified to Pyruvic acid (Ser); by autocatalysis.

It belongs to the phosphatidylserine decarboxylase family. PSD-B subfamily. Prokaryotic type I sub-subfamily. In terms of assembly, heterodimer of a large membrane-associated beta subunit and a small pyruvoyl-containing alpha subunit. Pyruvate is required as a cofactor. Post-translationally, is synthesized initially as an inactive proenzyme. Formation of the active enzyme involves a self-maturation process in which the active site pyruvoyl group is generated from an internal serine residue via an autocatalytic post-translational modification. Two non-identical subunits are generated from the proenzyme in this reaction, and the pyruvate is formed at the N-terminus of the alpha chain, which is derived from the carboxyl end of the proenzyme. The autoendoproteolytic cleavage occurs by a canonical serine protease mechanism, in which the side chain hydroxyl group of the serine supplies its oxygen atom to form the C-terminus of the beta chain, while the remainder of the serine residue undergoes an oxidative deamination to produce ammonia and the pyruvoyl prosthetic group on the alpha chain. During this reaction, the Ser that is part of the protease active site of the proenzyme becomes the pyruvoyl prosthetic group, which constitutes an essential element of the active site of the mature decarboxylase.

The protein resides in the cell membrane. It carries out the reaction a 1,2-diacyl-sn-glycero-3-phospho-L-serine + H(+) = a 1,2-diacyl-sn-glycero-3-phosphoethanolamine + CO2. The protein operates within phospholipid metabolism; phosphatidylethanolamine biosynthesis; phosphatidylethanolamine from CDP-diacylglycerol: step 2/2. In terms of biological role, catalyzes the formation of phosphatidylethanolamine (PtdEtn) from phosphatidylserine (PtdSer). This Wigglesworthia glossinidia brevipalpis protein is Phosphatidylserine decarboxylase proenzyme.